Here is a 688-residue protein sequence, read N- to C-terminus: Zinc finger protein 770 (688 aa).

A Glycyl lysine isopeptide (Lys-Gly) (interchain with G-Cter in SUMO2) cross-link involves residue K11. C2H2-type zinc fingers lie at residues 27–49, 55–77, and 81–103; these read YVCNICFKHFETPSKLARHYLIH, FECDVCHKTFRQLVHLERHQLTH, and FKCSICQRHFKNLKTFVKHQQLH. Residues K112, K121, and K146 each participate in a glycyl lysine isopeptide (Lys-Gly) (interchain with G-Cter in SUMO2) cross-link. C2H2-type zinc fingers lie at residues 160–182, 188–210, and 216–238; these read HACTICGKMFPSQSKLDRHVLIH, FKCVLCTKSFRQSTHLKIHQLTH, and FQCCFCQKGFKIQSKLLKHKQIH. A Glycyl lysine isopeptide (Lys-Gly) (interchain with G-Cter in SUMO2) cross-link involves residue K262. The segment at 294–318 adopts a C2H2-type 7; degenerate zinc-finger fold; it reads FQCPKCEKCFESEQILNEHSCFPAR. Glycyl lysine isopeptide (Lys-Gly) (interchain with G-Cter in SUMO2) cross-links involve residues K420 and K437. C2H2-type zinc fingers lie at residues 475–497, 503–525, 623–645, and 651–673; these read CPCDKCEKVFPSISKLKRHYLIH, FGCNICGKSFRQSAHLKRHEQTH, YRCSVCAKSFRSPSKLERHYLIH, and FECSVCGKTFRQAPHWKRHQLTH. K681 participates in a covalent cross-link: Glycyl lysine isopeptide (Lys-Gly) (interchain with G-Cter in SUMO2).

It belongs to the krueppel C2H2-type zinc-finger protein family.

The protein resides in the nucleus. Its function is as follows. May be involved in transcriptional regulation. The sequence is that of Zinc finger protein 770 (ZNF770) from Pongo abelii (Sumatran orangutan).